We begin with the raw amino-acid sequence, 692 residues long: MSYTPMSDLGQQGLFDITRTLLQQPDLASLSEALSQLVKRSALADSAGIVLWQAQSQRAQYYATRENGRPVEYEDETVLAHGPVRRILSRPDALHCNFHEFTETWPQLAASGLYPEFGHYCLLPLAAEGRIFGGCEFIRQEDRPWSEKEYDRLHTFTQIVGVVAEQIQNRVNNNVDYDLLCRERDNFRILVAITNAVLSRLDIDELVSEVAKEIHHYFNIDAISIVLRSHRKNKLNIYSTHYLDEHHPAHEQSEVDEAGTLTERVFKSKEMLLINLNERDPLAPYERMLFDTWGNQIQTLCLLPLMSGKTMLGVLKLAQCEEKVFTTANLKLLRQIAERVAIAVDNALAYQEIHRLKERLVDENLALTEQLNNVDSEFGEIIGRSEAMYNVLKQVEMVAQSDSTVLILGETGTGKELIARAIHNLSGRSGRRMVKMNCAAMPAGLLESDLFGHERGAFTGASAQRIGRFELADKSSLFLDEVGDMPLELQPKLLRVLQEQEFERLGSNKLIQTDVRLIAATNRDLKKMVADREFRNDLYYRLNVFPIQLPPLRERPEDIPLLVKAFTFKIARRMGRNIDSIPAETLRTLSSMEWPGNVRELENVVERAVLLTRGNVLQLSLPDITAVTPDTSPVATESAKEGEDEYQLIIRVLKETNGVVAGPKGAAQRLGLKRTTLLSRMKRLGIDKDALA.

Residues 202–344 enclose the GAF domain; that stretch reads DIDELVSEVA…QIAERVAIAV (143 aa). One can recognise a Sigma-54 factor interaction domain in the interval 381 to 610; that stretch reads IIGRSEAMYN…LENVVERAVL (230 aa). ATP is bound by residues 409–416 and 472–481; these read GETGTGKE and ADKSSLFLDE. A DNA-binding region (H-T-H motif) is located at residues 663 to 682; the sequence is PKGAAQRLGLKRTTLLSRMK.

Required for induction of expression of the formate dehydrogenase H and hydrogenase-3 structural genes. This chain is Formate hydrogenlyase transcriptional activator (fhlA), found in Salmonella typhimurium (strain SL1344).